The primary structure comprises 540 residues: RNA exonuclease 3 (540 aa).

A C3H1-type zinc finger spans residues 7-34 (QFKHIVCPFLRTGRKCQSRNCFFSHDFQ). Positions 382–529 (HCALDCELCY…EDAVSALQLV (148 aa)) constitute an Exonuclease domain.

This sequence belongs to the REXO1/REXO3 family.

The protein resides in the cytoplasm. It is found in the nucleus. In terms of biological role, 3' to 5' exoribonuclease required for proper 3' end maturation of MRP RNA and of the U5L snRNA. The chain is RNA exonuclease 3 (rex3) from Schizosaccharomyces pombe (strain 972 / ATCC 24843) (Fission yeast).